A 467-amino-acid chain; its full sequence is Light-independent protochlorophyllide reductase subunit N (467 aa).

[4Fe-4S] cluster is bound by residues Cys-23, Cys-48, and Cys-108.

Belongs to the BchN/ChlN family. Protochlorophyllide reductase is composed of three subunits; ChlL, ChlN and ChlB. Forms a heterotetramer of two ChlB and two ChlN subunits. It depends on [4Fe-4S] cluster as a cofactor.

The catalysed reaction is chlorophyllide a + oxidized 2[4Fe-4S]-[ferredoxin] + 2 ADP + 2 phosphate = protochlorophyllide a + reduced 2[4Fe-4S]-[ferredoxin] + 2 ATP + 2 H2O. It participates in porphyrin-containing compound metabolism; chlorophyll biosynthesis (light-independent). Its function is as follows. Component of the dark-operative protochlorophyllide reductase (DPOR) that uses Mg-ATP and reduced ferredoxin to reduce ring D of protochlorophyllide (Pchlide) to form chlorophyllide a (Chlide). This reaction is light-independent. The NB-protein (ChlN-ChlB) is the catalytic component of the complex. The protein is Light-independent protochlorophyllide reductase subunit N of Trichormus variabilis (strain ATCC 29413 / PCC 7937) (Anabaena variabilis).